Consider the following 515-residue polypeptide: Glucose-6-phosphate 1-dehydrogenase 6, cytoplasmic (515 aa).

NADP(+) contacts are provided by residues 38–45, R73, Y155, and K182; that span reads GASGDLAK. Residues K182, 212-216, E250, and D269 contribute to the D-glucose 6-phosphate site; that span reads HYLGK. H274 acts as the Proton acceptor in catalysis. Residue K357 coordinates NADP(+). Positions 360 and 365 each coordinate D-glucose 6-phosphate. Residues K366, R370, and R394 each contribute to the NADP(+) site. Q396 contacts D-glucose 6-phosphate. NADP(+)-binding positions include 402-404, 422-424, R488, and W510; these read YMK and DLS.

This sequence belongs to the glucose-6-phosphate dehydrogenase family. In terms of assembly, forms homodimer. Expressed in roots, leaves, stems, buds, flowers and siliques.

Its subcellular location is the cytoplasm. The protein resides in the cytosol. It catalyses the reaction D-glucose 6-phosphate + NADP(+) = 6-phospho-D-glucono-1,5-lactone + NADPH + H(+). Its pathway is carbohydrate degradation; pentose phosphate pathway; D-ribulose 5-phosphate from D-glucose 6-phosphate (oxidative stage): step 1/3. Regulated by metabolites. Functionally, catalyzes the rate-limiting step of the oxidative pentose-phosphate pathway, which represents a route for the dissimilation of carbohydrates besides glycolysis. The main function of this enzyme is to provide reducing power (NADPH) and pentose phosphates for fatty acid and nucleic acid synthesis which are involved in membrane synthesis and cell division. The sequence is that of Glucose-6-phosphate 1-dehydrogenase 6, cytoplasmic from Arabidopsis thaliana (Mouse-ear cress).